A 155-amino-acid chain; its full sequence is Endoribonuclease YbeY (155 aa).

The Zn(2+) site is built by His114, His118, and His124.

This sequence belongs to the endoribonuclease YbeY family. Requires Zn(2+) as cofactor.

It is found in the cytoplasm. Functionally, single strand-specific metallo-endoribonuclease involved in late-stage 70S ribosome quality control and in maturation of the 3' terminus of the 16S rRNA. The chain is Endoribonuclease YbeY from Salmonella arizonae (strain ATCC BAA-731 / CDC346-86 / RSK2980).